The following is a 104-amino-acid chain: Class I hydrophobin 12 (104 aa).

An N-terminal signal peptide occupies residues 1–25; that stretch reads MFSKATLFFTAAVVIVAAGATPTTS. 4 disulfide bridges follow: cysteine 27–cysteine 85, cysteine 34–cysteine 79, cysteine 35–cysteine 67, and cysteine 86–cysteine 99.

This sequence belongs to the fungal hydrophobin family. As to quaternary structure, self-assembles to form functional amyloid fibrils called rodlets. Self-assembly into fibrillar rodlets occurs spontaneously at hydrophobic:hydrophilic interfaces and the rodlets further associate laterally to form amphipathic monolayers.

It localises to the secreted. The protein localises to the cell wall. Functionally, aerial growth, conidiation, and dispersal of filamentous fungi in the environment rely upon a capability of their secreting small amphipathic proteins called hydrophobins (HPBs) with low sequence identity. Class I can self-assemble into an outermost layer of rodlet bundles on aerial cell surfaces, conferring cellular hydrophobicity that supports fungal growth, development and dispersal; whereas Class II form highly ordered films at water-air interfaces through intermolecular interactions but contribute nothing to the rodlet structure. Hydph12 is a class I hydrophobin involved in the formation of mycelium knots. The chain is Class I hydrophobin 12 from Pleurotus ostreatus (strain PC15) (Oyster mushroom).